Here is a 451-residue protein sequence, read N- to C-terminus: C4-dicarboxylate transport protein (451 aa).

The next 9 helical transmembrane spans lie at 17–37 (SLYV…HFYP), 53–73 (LIKM…IAGM), 85–105 (LALL…LIVV), 153–173 (AFAK…GFAL), 193–213 (VLFT…FGAM), 231–251 (LMGS…GLIA), 306–326 (GYSF…VFIA), 339–359 (ITLL…TGSG), and 361–381 (IVLA…LALI).

This sequence belongs to the dicarboxylate/amino acid:cation symporter (DAACS) (TC 2.A.23) family.

The protein resides in the cell inner membrane. Responsible for the transport of dicarboxylates such as succinate, fumarate, and malate from the periplasm across the membrane. The sequence is that of C4-dicarboxylate transport protein from Paracidovorax citrulli (strain AAC00-1) (Acidovorax citrulli).